Here is a 488-residue protein sequence, read N- to C-terminus: pH-response regulator protein palC (488 aa).

A BRO1 domain is found at 2-430; sequence PPYLYRLPTT…TVAFQPVPPV (429 aa). Positions 449-488 are disordered; it reads PPPSKFSPSRIGHLNEEQGNDSPELGETEDTSYAGKGNYF.

It belongs to the palC family.

Required for the proteolytic cleavage of the transcription factor RIM101 in response to alkaline ambient pH. The chain is pH-response regulator protein palC from Cryptococcus neoformans var. neoformans serotype D (strain B-3501A) (Filobasidiella neoformans).